Here is a 153-residue protein sequence, read N- to C-terminus: MAL-like protein (153 aa).

4 consecutive transmembrane segments (helical) span residues 22–42 (LFLT…FLVW), 59–79 (VMYV…SYLF), 97–117 (GTTG…TIVS), and 131–151 (AASF…FSIY). Residues 22–153 (LFLTIPFAFF…ILHAFSIYYH (132 aa)) form the MARVEL domain.

This sequence belongs to the MAL family.

The protein localises to the membrane. This Homo sapiens (Human) protein is MAL-like protein (MALL).